We begin with the raw amino-acid sequence, 620 residues long: UvrABC system protein C (620 aa).

Residues Asp13 to Ile92 enclose the GIY-YIG domain. In terms of domain architecture, UVR spans Thr204–Ile239.

It belongs to the UvrC family. In terms of assembly, interacts with UvrB in an incision complex.

It localises to the cytoplasm. Functionally, the UvrABC repair system catalyzes the recognition and processing of DNA lesions. UvrC both incises the 5' and 3' sides of the lesion. The N-terminal half is responsible for the 3' incision and the C-terminal half is responsible for the 5' incision. The polypeptide is UvrABC system protein C (Clostridium perfringens (strain SM101 / Type A)).